Reading from the N-terminus, the 113-residue chain is Large ribosomal subunit protein uL22 (113 aa).

The protein belongs to the universal ribosomal protein uL22 family. In terms of assembly, part of the 50S ribosomal subunit.

Its function is as follows. This protein binds specifically to 23S rRNA; its binding is stimulated by other ribosomal proteins, e.g. L4, L17, and L20. It is important during the early stages of 50S assembly. It makes multiple contacts with different domains of the 23S rRNA in the assembled 50S subunit and ribosome. Functionally, the globular domain of the protein is located near the polypeptide exit tunnel on the outside of the subunit, while an extended beta-hairpin is found that lines the wall of the exit tunnel in the center of the 70S ribosome. The protein is Large ribosomal subunit protein uL22 of Geobacillus stearothermophilus (Bacillus stearothermophilus).